The following is a 345-amino-acid chain: Phosphoribosylformylglycinamidine cyclo-ligase (345 aa).

The protein belongs to the AIR synthase family.

Its subcellular location is the cytoplasm. It carries out the reaction 2-formamido-N(1)-(5-O-phospho-beta-D-ribosyl)acetamidine + ATP = 5-amino-1-(5-phospho-beta-D-ribosyl)imidazole + ADP + phosphate + H(+). Its pathway is purine metabolism; IMP biosynthesis via de novo pathway; 5-amino-1-(5-phospho-D-ribosyl)imidazole from N(2)-formyl-N(1)-(5-phospho-D-ribosyl)glycinamide: step 2/2. This chain is Phosphoribosylformylglycinamidine cyclo-ligase, found in Limosilactobacillus fermentum (strain NBRC 3956 / LMG 18251) (Lactobacillus fermentum).